The chain runs to 83 residues: UPF0512 protein I (83 aa).

Belongs to the UPF0512 family.

The protein is UPF0512 protein I of Dictyostelium discoideum (Social amoeba).